We begin with the raw amino-acid sequence, 309 residues long: Dermonecrotic toxin LarSicTox-alphaIB2bi (309 aa).

A signal peptide is located at residue valine 1. The propeptide occupies 2 to 27 (RATEKFAPIYFFCHPLQSAETDVAER). Histidine 38 is an active-site residue. Glutamate 58 and aspartate 60 together coordinate Mg(2+). Catalysis depends on histidine 74, which acts as the Nucleophile. Disulfide bonds link cysteine 78-cysteine 84 and cysteine 80-cysteine 223. Aspartate 118 lines the Mg(2+) pocket. Asparagine 286 is a glycosylation site (N-linked (GlcNAc...) asparagine).

It belongs to the arthropod phospholipase D family. Class II subfamily. Mg(2+) is required as a cofactor. Expressed by the venom gland.

The protein resides in the secreted. The catalysed reaction is an N-(acyl)-sphingosylphosphocholine = an N-(acyl)-sphingosyl-1,3-cyclic phosphate + choline. It carries out the reaction N-hexanoyl-sphing-4-enine-1-phosphocholine = N-(hexanoyl)-sphing-4-enine-1,3-cyclic phosphate + choline. The enzyme catalyses N-(dodecanoyl)-sphing-4-enine-1-phosphocholine = N-dodecanoyl-sphing-4-enine-1,3-cyclic phosphate + choline. It catalyses the reaction a 1-acyl-sn-glycero-3-phosphocholine = a 1-acyl-sn-glycero-2,3-cyclic phosphate + choline. The catalysed reaction is 1-tetradecanoyl-sn-glycero-3-phosphocholine = 1-tetradecanoyl-sn-glycero-2,3-cyclic phosphate + choline. It carries out the reaction 1-octanoyl-sn-glycero-3-phosphocholine = 1-octanoyl-sn-glycero-2,3-cyclic phosphate + choline. The enzyme catalyses 1-hexadecanoyl-sn-glycero-3-phosphocholine = 1-hexadecanoyl-sn-glycero-2,3-cyclic phosphate + choline. It catalyses the reaction an N-(acyl)-sphingosylphosphoethanolamine = an N-(acyl)-sphingosyl-1,3-cyclic phosphate + ethanolamine. The catalysed reaction is N-dodecanoyl-heptadecasphing-4-enine-1-phosphoethanolamine = N-dodecanoyl-heptadecasphing-4-enine-1,3-cyclic phosphate + ethanolamine. Its function is as follows. Dermonecrotic toxins cleave the phosphodiester linkage between the phosphate and headgroup of certain phospholipids (sphingolipid and lysolipid substrates), forming an alcohol (often choline) and a cyclic phosphate. This toxin acts on sphingomyelin (SM) with high activity and on lysophosphatidylcholine (LPC) and ceramide phosphoethanolamine (CPE) with low activity. In vivo, shows potent insecticidal activities. On mammals, induces dermonecrosis, hemolysis, increased vascular permeability, edema, inflammatory response, and platelet aggregation. This Loxosceles arizonica (Arizona brown spider) protein is Dermonecrotic toxin LarSicTox-alphaIB2bi.